Here is a 406-residue protein sequence, read N- to C-terminus: Linalool 8-monooxygenase (406 aa).

Residue C355 coordinates heme.

The protein belongs to the cytochrome P450 family. Requires heme as cofactor.

It carries out the reaction linalool + 2 reduced [NADPH--hemoprotein reductase] + 2 O2 = (6E)-8-oxolinalool + 2 oxidized [NADPH--hemoprotein reductase] + 3 H2O + 2 H(+). The protein operates within terpene metabolism; linalool degradation. Functionally, catalyzes the 8-methyl hydroxylation of linalool. This Pseudomonas putida (Arthrobacter siderocapsulatus) protein is Linalool 8-monooxygenase (linC).